Consider the following 183-residue polypeptide: Glutathione-regulated potassium-efflux system ancillary protein KefG (183 aa).

It belongs to the NAD(P)H dehydrogenase (quinone) family. KefG subfamily. Interacts with KefB.

The protein localises to the cell inner membrane. The enzyme catalyses a quinone + NADH + H(+) = a quinol + NAD(+). It catalyses the reaction a quinone + NADPH + H(+) = a quinol + NADP(+). In terms of biological role, regulatory subunit of a potassium efflux system that confers protection against electrophiles. Required for full activity of KefB. The chain is Glutathione-regulated potassium-efflux system ancillary protein KefG from Shigella flexneri serotype 5b (strain 8401).